The primary structure comprises 189 residues: Ribosome hibernation promotion factor (189 aa).

Belongs to the HPF/YfiA ribosome-associated protein family. Long HPF subfamily. In terms of assembly, interacts with 100S ribosomes. Not associated with 70S ribosome monomers, about 1 monomer per ribosome.

It is found in the cytoplasm. Its function is as follows. Required for dimerization of active 70S ribosomes into 100S ribosomes in stationary phase; 100S ribosomes are translationally inactive and sometimes present during exponential growth. May not be the only factor implicated. Might negatively regulate the activity of the sigma-54 factor (SigL). This is Ribosome hibernation promotion factor (yvyD) from Bacillus subtilis (strain 168).